The primary structure comprises 84 residues: MAHKKGAASTKNGRDSNSQRLGVKRYGGQVVNAGEIIVRQRGTHFHPGSGVGRGGDDTLFALVAGAVQFGTRRGRRVVNIVPGE.

Residues 1 to 24 form a disordered region; it reads MAHKKGAASTKNGRDSNSQRLGVK. Residues 9 to 20 show a composition bias toward polar residues; the sequence is STKNGRDSNSQR.

Belongs to the bacterial ribosomal protein bL27 family.

The polypeptide is Large ribosomal subunit protein bL27 (Nocardioides sp. (strain ATCC BAA-499 / JS614)).